A 590-amino-acid chain; its full sequence is Aspartate--tRNA(Asp/Asn) ligase (590 aa).

Glu-175 contributes to the L-aspartate binding site. The interval 199 to 202 (QQYK) is aspartate. Residues Arg-221 and His-450 each coordinate L-aspartate. Residue 221–223 (RDE) coordinates ATP. ATP is bound at residue Glu-484. Arg-491 lines the L-aspartate pocket. 536–539 (GVDR) contacts ATP.

This sequence belongs to the class-II aminoacyl-tRNA synthetase family. Type 1 subfamily. In terms of assembly, homodimer.

The protein localises to the cytoplasm. The enzyme catalyses tRNA(Asx) + L-aspartate + ATP = L-aspartyl-tRNA(Asx) + AMP + diphosphate. Its function is as follows. Aspartyl-tRNA synthetase with relaxed tRNA specificity since it is able to aspartylate not only its cognate tRNA(Asp) but also tRNA(Asn). Reaction proceeds in two steps: L-aspartate is first activated by ATP to form Asp-AMP and then transferred to the acceptor end of tRNA(Asp/Asn). This Rhodopseudomonas palustris (strain HaA2) protein is Aspartate--tRNA(Asp/Asn) ligase.